The sequence spans 540 residues: Mitochondrial antiviral-signaling protein (540 aa).

The residue at position 2 (Pro2) is an N-acetylproline. Topologically, residues 2–513 (PFAEDKTYKY…REVPCHRPSP (512 aa)) are cytoplasmic. Residues Lys7 and Lys10 each participate in a glycyl lysine isopeptide (Lys-Gly) (interchain with G-Cter in ubiquitin) cross-link. Residues 10 to 77 (KYICRNFSNF…WVEYFIAALR (68 aa)) enclose the CARD domain. Positions 10-77 (KYICRNFSNF…WVEYFIAALR (68 aa)) are required for interaction with NLRX1. A lipid anchor (S-palmitoyl cysteine) is attached at Cys79. Residues 95-297 (YQPRTSDRPP…EAPANSLPSK (203 aa)) form a disordered region. A compositionally biased stretch (pro residues) spans 106-122 (PLEPPSLPAERPGPPTP). The segment at 143-147 (PVQET) is interaction with TRAF2. Polar residues-rich tracts occupy residues 145-165 (QETQ…QTLS) and 179-216 (ESSS…SLTP). 5 positions are modified to phosphoserine: Ser152, Ser157, Ser165, Ser180, and Ser188. The interval 153 to 158 (PGENSE) is interaction with TRAF6. At Thr215 the chain carries Phosphothreonine. Phosphoserine occurs at positions 222 and 233. Residue Thr234 is modified to Phosphothreonine. The residue at position 236 (Arg236) is an Asymmetric dimethylarginine. The segment covering 241–266 (PGPTGSVVSTGTSFSSSSPGLASAGA) has biased composition (low complexity). A phosphoserine mark is found at Ser253 and Ser258. Residues Lys311 and Lys325 each participate in a glycyl lysine isopeptide (Lys-Gly) (interchain with G-Cter in ubiquitin) cross-link. Disordered stretches follow at residues 314-358 (ANPA…RAGM) and 373-419 (SAST…SELS). Composition is skewed to polar residues over residues 317–331 (ASVS…TSSK), 339–355 (NALT…NSTR), and 373–382 (SASTVPTDGS). The span at 388-403 (TPAAPTPAGATGGSSA) shows a compositional bias: low complexity. At Ser408 the chain carries Phosphoserine. A pLxIS motif motif is present at residues 439–442 (LAIS). Position 442 is a phosphoserine; by TBK1 (Ser442). Residues 455 to 460 (PEENEY) form an interaction with TRAF6 region. Glycyl lysine isopeptide (Lys-Gly) (interchain with G-Cter in ubiquitin) cross-links involve residues Lys461 and Lys500. A (Microbial infection) Glycyl lysine isopeptide (Lys-Gly) (interchain with G-Cter in UFM1) cross-link involves residue Lys461. The disordered stretch occupies residues 476-507 (IQLLEGNPGPPADPDGGPRPQADRKFQEREVP). The segment covering 496 to 507 (QADRKFQEREVP) has biased composition (basic and acidic residues). The chain crosses the membrane as a helical span at residues 514–534 (GALWLQVAVTGVLVVTLLVVL). At 535–540 (YRRRLH) the chain is on the mitochondrial intermembrane side.

In terms of assembly, self-associates and polymerizes (via CARD domains) to form 400 nM long three-stranded helical filaments on mitochondria, filament nucleation requires interaction with RIGI whose CARD domains act as a template for filament assembly. Interacts with RIGI, IFIH1/MDA5, TRAF2, TRAF6 and C1QBP. May interact with FADD, RIPK1, CHUK and IKBKB. Interacts (when phosphorylated) with IRF3; following activation and phosphorylation on the pLxIS motif by TBK1, recruits IRF3. Interacts with NLRX1. Interaction with NLRX1 requires the CARD domain. Interacts with PSMA7. Interacts with TRAFD1. Interacts (via C-terminus) with PCBP2 in a complex containing MAVS/IPS1, PCBP2 and ITCH. Interacts with CYLD. Interacts with SRC. Interacts with DHX58/LGP2 and IKBKE. Interacts with STING1. Interacts with IFIT3 (via N-terminus). Interacts with TBK1 only in the presence of IFIT3. Interacts with TTLL12; the interaction prevents MAVS binding to TBK1 and IKBKE. Interacts with MUL1. Interacts with ANKRD17. Interacts with NDFIP1. Interacts with SMURF1; the interaction is mediated by NDFIP1 and leads to MAVS ubiquitination and degradation. Interacts with UBXN1; this interaction inhibits MAVS-mediated antiviral pathway. Interacts (via C-terminus) with GPATCH3; the interaction is markedly increased upon viral infection. Directly interacts (via CARD domain) with ATG5 and ATG12, either as ATG5 and ATG12 monomers or as ATG12-ATG5 conjugates. Interacts with DHX33 (via the helicase C-terminal domain). Interacts with DDX3X (via C-terminus); this interaction occurs rapidly, but transiently after Sendai virus infection. The interaction with DDX3X potentiates MAVS-mediated IFNB induction. Conversely inhibition of this interaction, for instance by HCV core protein, prevents MAVS-mediated IFNB induction. Transiently interacts with TRAF3 early during Sendai virus infection. Interacts with CLPB; the interaction is enhanced by Sendai virus infection. Interacts with TRAF3IP3. Interacts with TOMM70; the interaction is enhanced by Sendai virus infection. Interacts with ZNFX1. Interacts with N4BP3; this interaction promotes the polyubiquitination of MAVS. Interacts with TAX1BP1; this interaction induces MAVS polyubiquitination. Interacts with NLRP3; promoting NLRP3 recruitment to mitochondria and activation of the NLRP3 inflammasome. Interacts with ECSIT; this interaction bridges RIGI to the MAVS complex at the mitochondrion. Interacts with UBL7; this interaction promotes MAVS 'Lys-27'-linked ubiquitination leading to type I interferon production. Interacts (via transmembrane domain) with SMIM30/MAVI1 (via transmembrane domain); the interaction disrupts MAVS interaction with RIGI and inhibits MAVS aggregation, resulting in the repression of type I interferon signaling and innate immune responses. As to quaternary structure, (Microbial infection) Interacts with hepatitis C virus (HCV) NS3/4A protease; this interaction leads to MAVS cleavage, thereby preventing the establishment of an antiviral state. (Microbial infection) Interacts with hepatitis GB virus B NS3/4A protease; this interaction leads to MAVS cleavage. In terms of assembly, (Microbial infection) Interacts with human respiratory syncytial virus/HRSV protein NS1; this interaction disrupts MAVS binding to RIGI. As to quaternary structure, (Microbial infection) Interacts with Andes virus Nnon-structural protein NS-S; this interaction may reduce MAVS ubiquitination and leads to inhibition of MAVS-induced type-I IFN signaling pathway. (Microbial infection) Interacts with Seneca Valley virus protease 3C; this interaction allows the cleavage of MAVS and subsequent suppression of host innate immunity. In terms of assembly, (Microbial infection) Interacts with SARS-CoV virus protein ORF9b; this interaction mediates MAVS proteasomal degradation. As to quaternary structure, (Microbial infection) Interacts with SARS-CoV-2 virus protein M; this interaction impairs MAVS self-association and its recruitment of downstream components. (Microbial infection) Interacts with foot-and-mouth disease virus protein VP1; this interaction competes with TRAF3 interaction to MAVS leading to suppression of host innate immunity. In terms of assembly, (Microbial infection) Interacts with Epstein-Barr virus protein BILF1; this interaction mediates MAVS routing from mitochondria to lysosomes. In terms of processing, following activation, phosphorylated by TBK1 at Ser-442 in the pLxIS motif. The phosphorylated pLxIS motif constitutes an IRF3-binding motif, leading to recruitment of the transcription factor IRF3 to induce type-I interferons and other cytokines. Ubiquitinated. Undergoes 'Lys-48'-linked polyubiquitination catalyzed by ITCH; ITCH-dependent polyubiquitination is mediated by the interaction with PCBP2 and leads to MAVS/IPS1 proteasomal degradation. Ubiquitinated by RNF125, leading to its degradation by the proteasome. Undergoes 'Lys-48'-linked ubiquitination catalyzed by SMURF1. Undergoes 'Lys-48'-linked ubiquitination catalyzed by MARCHF5 at Lys-7 and Lys-500, leading to proteasomal degradation. Ubiquitinated via 'Lys-63'-linked ubiquitination at Lys-10, Lys-311 and Lys-461 by UBE2N and TRIM31, promoting MAVS polymerization and formation of three-stranded helical filaments on mitochondria. Undergoes 'Lys-63'-linked ubiquitination leading to enhanced interaction between MAVS and TRAF2. Undergoes 'Lys-27'-linked ubiquitination by TRIM21 leading to enhanced interaction between MAVS and TBK1. Deubiquitinated by USP10 leading to attenuation of RIGI-mediated MAVS aggregation and production of type I interferon. Undergoes 'Lys-48'-linked polyubiquitination catalyzed by RNF115 leading to its degradation. Post-translationally, palmitoylated by ZHDDC4. Palmitoylation promotes MAVS stabilization and activation by inhibiting 'Lys-48'- but facilitating 'Lys-63'-linked ubiquitination. In terms of processing, proteolytically cleaved by apoptotic caspases during apoptosis, leading to its inactivation. Cleavage by CASP3 during virus-induced apoptosis inactivates it, preventing cytokine overproduction. (Microbial infection) Cleaved and degraded by hepatitis A virus (HAV) protein 3ABC allowing the virus to disrupt the activation of host IRF3 through the MDA5 pathway. Post-translationally, (Microbial infection) Cleaved by the protease 2A of coxsackievirus B3, poliovirus and enterovirus 71 allowing the virus to disrupt the host type I interferon production. In terms of processing, (Microbial infection) Cleaved by Seneca Valley virus protease 3C allowing the virus to suppress interferon type-I production. (Microbial infection) Cleaved by HCV protease NS3/4A, thereby preventing the establishment of an antiviral state. Post-translationally, (Microbial infection) UFMylated by ULF1 in association with Epstein-Barr virus BILF1; leading to MAVS routing to the lysosome. In terms of tissue distribution, present in T-cells, monocytes, epithelial cells and hepatocytes (at protein level). Ubiquitously expressed, with highest levels in heart, skeletal muscle, liver, placenta and peripheral blood leukocytes.

The protein localises to the mitochondrion outer membrane. It is found in the mitochondrion. Its subcellular location is the peroxisome. Functionally, adapter required for innate immune defense against viruses. Acts downstream of DHX33, RIGI and IFIH1/MDA5, which detect intracellular dsRNA produced during viral replication, to coordinate pathways leading to the activation of NF-kappa-B, IRF3 and IRF7, and to the subsequent induction of antiviral cytokines such as IFNB and RANTES (CCL5). Peroxisomal and mitochondrial MAVS act sequentially to create an antiviral cellular state. Upon viral infection, peroxisomal MAVS induces the rapid interferon-independent expression of defense factors that provide short-term protection, whereas mitochondrial MAVS activates an interferon-dependent signaling pathway with delayed kinetics, which amplifies and stabilizes the antiviral response. May activate the same pathways following detection of extracellular dsRNA by TLR3. May protect cells from apoptosis. Involved in NLRP3 inflammasome activation by mediating NLRP3 recruitment to mitochondria. The protein is Mitochondrial antiviral-signaling protein of Homo sapiens (Human).